An 82-amino-acid chain; its full sequence is Small ribosomal subunit protein bS16 (82 aa).

It belongs to the bacterial ribosomal protein bS16 family.

This chain is Small ribosomal subunit protein bS16, found in Actinobacillus pleuropneumoniae serotype 5b (strain L20).